The sequence spans 369 residues: Chorismate synthase (369 aa).

Residues Arg-48 and Arg-54 each coordinate NADP(+). FMN contacts are provided by residues 125–127, 238–239, Gly-278, 293–297, and Arg-319; these read RSS, NA, and KPTSS.

It belongs to the chorismate synthase family. As to quaternary structure, homotetramer. FMNH2 is required as a cofactor.

It catalyses the reaction 5-O-(1-carboxyvinyl)-3-phosphoshikimate = chorismate + phosphate. It functions in the pathway metabolic intermediate biosynthesis; chorismate biosynthesis; chorismate from D-erythrose 4-phosphate and phosphoenolpyruvate: step 7/7. Functionally, catalyzes the anti-1,4-elimination of the C-3 phosphate and the C-6 proR hydrogen from 5-enolpyruvylshikimate-3-phosphate (EPSP) to yield chorismate, which is the branch point compound that serves as the starting substrate for the three terminal pathways of aromatic amino acid biosynthesis. This reaction introduces a second double bond into the aromatic ring system. The protein is Chorismate synthase of Cupriavidus metallidurans (strain ATCC 43123 / DSM 2839 / NBRC 102507 / CH34) (Ralstonia metallidurans).